The following is a 773-amino-acid chain: 5-methyltetrahydropteroyltriglutamate--homocysteine methyltransferase (773 aa).

Residues 16–19 and K116 contribute to the 5-methyltetrahydropteroyltri-L-glutamate site; that span reads RELK. L-homocysteine is bound by residues 437-439 and E490; that span reads IGS. Residues 437–439 and E490 contribute to the L-methionine site; that span reads IGS. Residues 521-522 and W567 each bind 5-methyltetrahydropteroyltri-L-glutamate; that span reads RC. Residue D605 coordinates L-homocysteine. An L-methionine-binding site is contributed by D605. E611 is a binding site for 5-methyltetrahydropteroyltri-L-glutamate. Zn(2+) contacts are provided by H647, C649, and E671. H700 (proton donor) is an active-site residue. C732 lines the Zn(2+) pocket.

Belongs to the vitamin-B12 independent methionine synthase family. The cofactor is Zn(2+).

It catalyses the reaction 5-methyltetrahydropteroyltri-L-glutamate + L-homocysteine = tetrahydropteroyltri-L-glutamate + L-methionine. It participates in amino-acid biosynthesis; L-methionine biosynthesis via de novo pathway; L-methionine from L-homocysteine (MetE route): step 1/1. Its function is as follows. Catalyzes the transfer of a methyl group from 5-methyltetrahydrofolate to homocysteine resulting in methionine formation. This is 5-methyltetrahydropteroyltriglutamate--homocysteine methyltransferase from Alkalilimnicola ehrlichii (strain ATCC BAA-1101 / DSM 17681 / MLHE-1).